Here is a 224-residue protein sequence, read N- to C-terminus: MADS-box transcription factor 16 (224 aa).

One can recognise an MADS-box domain in the interval 1–61 (MGRGKIEIKR…GKYHEFCSPS (61 aa)). In terms of domain architecture, K-box spans 84-174 (YENMQRTLSH…QQELGLREEP (91 aa)).

May interact with the K-box of MADS4, MADS6 and MADS8. May form a heterodimer with MADS4. In terms of tissue distribution, expressed in lodicules, stamens and carpels.

It localises to the nucleus. Functionally, probable transcription factor involved in the development of floral organs. Required for normal development of lodicules and stamens (whorls 2 and 3). May function as a heterodimer with MADS4. The protein is MADS-box transcription factor 16 (MADS16) of Oryza sativa subsp. japonica (Rice).